The primary structure comprises 71 residues: NAD(P)H-quinone oxidoreductase subunit O (71 aa).

This sequence belongs to the complex I NdhO subunit family. In terms of assembly, NDH-1 can be composed of about 15 different subunits; different subcomplexes with different compositions have been identified which probably have different functions.

The protein resides in the cellular thylakoid membrane. The enzyme catalyses a plastoquinone + NADH + (n+1) H(+)(in) = a plastoquinol + NAD(+) + n H(+)(out). It carries out the reaction a plastoquinone + NADPH + (n+1) H(+)(in) = a plastoquinol + NADP(+) + n H(+)(out). NDH-1 shuttles electrons from an unknown electron donor, via FMN and iron-sulfur (Fe-S) centers, to quinones in the respiratory and/or the photosynthetic chain. The immediate electron acceptor for the enzyme in this species is believed to be plastoquinone. Couples the redox reaction to proton translocation, and thus conserves the redox energy in a proton gradient. Cyanobacterial NDH-1 also plays a role in inorganic carbon-concentration. The polypeptide is NAD(P)H-quinone oxidoreductase subunit O (Nostoc punctiforme (strain ATCC 29133 / PCC 73102)).